Here is a 321-residue protein sequence, read N- to C-terminus: Mas-related G-protein coupled receptor member D (321 aa).

At 1 to 33 the chain is on the extracellular side; sequence MNQTLNSSGTVESALNYSRGSTVHTAYLVLSSL. N-linked (GlcNAc...) asparagine glycans are attached at residues Asn2, Asn6, and Asn16. Residues 34-54 form a helical membrane-spanning segment; it reads AMFTCLCGMAGNSMVIWLLGF. Topologically, residues 55–59 are cytoplasmic; that stretch reads RMHRN. Residues 60–80 traverse the membrane as a helical segment; the sequence is PFCIYILNLAAADLLFLFSMA. Over 81–112 the chain is Extracellular; it reads STLSLETQPLVNTTDKVHELMKRLMYFAYTVG. N-linked (GlcNAc...) asparagine glycosylation occurs at Asn92. A helical membrane pass occupies residues 113-133; sequence LSLLTAISTQRCLSVLFPIWF. Over 134–142 the chain is Cytoplasmic; that stretch reads KCHRPRHLS. The helical transmembrane segment at 143–163 threads the bilayer; that stretch reads AWVCGLLWTLCLLMNGLTSSF. Residues 164–184 lie on the Extracellular side of the membrane; sequence CSKFLKFNEDRCFRVDMVQAA. Residues 185 to 205 traverse the membrane as a helical segment; that stretch reads LIMGVLTPVMTLSSLTLFVWV. Residues 206 to 218 are Cytoplasmic-facing; the sequence is RRSSQQWRRQPTR. The helical transmembrane segment at 219 to 239 threads the bilayer; it reads LFVVVLASVLVFLICSLPLSI. Residues 240–257 lie on the Extracellular side of the membrane; the sequence is YWFVLYWLSLPPEMQVLC. Residues 258–280 traverse the membrane as a helical segment; it reads FSLSRLSSSVSSSANPVIYFLVG. The Cytoplasmic segment spans residues 281-321; that stretch reads SRRSHRLPTRSLGTVLQQALREEPELEGGETPTVGTNEMGA. The segment at 302–321 is disordered; it reads EEPELEGGETPTVGTNEMGA.

The protein belongs to the G-protein coupled receptor 1 family. Mas subfamily.

It is found in the cell membrane. May regulate nociceptor function and/or development, including the sensation or modulation of pain. Functions as a specific membrane receptor for beta-alanine. Beta-alanine at micromolar doses specifically evoked Ca(2+) influx in cells expressing the receptor. Beta-alanine decreases forskolin-stimulated cAMP production in cells expressing the receptor, suggesting that the receptor couples with G-protein G(q) and G(i). The polypeptide is Mas-related G-protein coupled receptor member D (MRGPRD) (Homo sapiens (Human)).